Here is a 429-residue protein sequence, read N- to C-terminus: Glutamate-1-semialdehyde 2,1-aminomutase 2 (429 aa).

At K268 the chain carries N6-(pyridoxal phosphate)lysine.

Belongs to the class-III pyridoxal-phosphate-dependent aminotransferase family. HemL subfamily. Homodimer. Pyridoxal 5'-phosphate is required as a cofactor.

The protein resides in the cytoplasm. The catalysed reaction is (S)-4-amino-5-oxopentanoate = 5-aminolevulinate. It participates in porphyrin-containing compound metabolism; protoporphyrin-IX biosynthesis; 5-aminolevulinate from L-glutamyl-tRNA(Glu): step 2/2. The polypeptide is Glutamate-1-semialdehyde 2,1-aminomutase 2 (Bacillus cereus (strain AH187)).